A 138-amino-acid chain; its full sequence is Endoribonuclease YbeY (138 aa).

Zn(2+) is bound by residues His98, His102, and His108.

The protein belongs to the endoribonuclease YbeY family. Zn(2+) is required as a cofactor.

It is found in the cytoplasm. Single strand-specific metallo-endoribonuclease involved in late-stage 70S ribosome quality control and in maturation of the 3' terminus of the 16S rRNA. The polypeptide is Endoribonuclease YbeY (Thermosipho melanesiensis (strain DSM 12029 / CIP 104789 / BI429)).